We begin with the raw amino-acid sequence, 124 residues long: Large ribosomal subunit protein bL21 (124 aa).

This sequence belongs to the bacterial ribosomal protein bL21 family. In terms of assembly, part of the 50S ribosomal subunit. Contacts protein L20.

This protein binds to 23S rRNA in the presence of protein L20. The polypeptide is Large ribosomal subunit protein bL21 (Synechococcus sp. (strain WH7803)).